Consider the following 178-residue polypeptide: Large ribosomal subunit protein bL25 (178 aa).

The protein belongs to the bacterial ribosomal protein bL25 family. CTC subfamily. As to quaternary structure, part of the 50S ribosomal subunit; part of the 5S rRNA/L5/L18/L25 subcomplex. Contacts the 5S rRNA. Binds to the 5S rRNA independently of L5 and L18.

Functionally, this is one of the proteins that binds to the 5S RNA in the ribosome where it forms part of the central protuberance. The protein is Large ribosomal subunit protein bL25 of Helicobacter pylori (strain J99 / ATCC 700824) (Campylobacter pylori J99).